Reading from the N-terminus, the 363-residue chain is UDP-N-acetylglucosamine--N-acetylmuramyl-(pentapeptide) pyrophosphoryl-undecaprenol N-acetylglucosamine transferase (363 aa).

UDP-N-acetyl-alpha-D-glucosamine contacts are provided by residues 10–12 (TAG), Asn124, Arg161, Ser195, and Gln291.

This sequence belongs to the glycosyltransferase 28 family. MurG subfamily.

The protein resides in the cell membrane. The catalysed reaction is di-trans,octa-cis-undecaprenyl diphospho-N-acetyl-alpha-D-muramoyl-L-alanyl-D-glutamyl-meso-2,6-diaminopimeloyl-D-alanyl-D-alanine + UDP-N-acetyl-alpha-D-glucosamine = di-trans,octa-cis-undecaprenyl diphospho-[N-acetyl-alpha-D-glucosaminyl-(1-&gt;4)]-N-acetyl-alpha-D-muramoyl-L-alanyl-D-glutamyl-meso-2,6-diaminopimeloyl-D-alanyl-D-alanine + UDP + H(+). Its pathway is cell wall biogenesis; peptidoglycan biosynthesis. In terms of biological role, cell wall formation. Catalyzes the transfer of a GlcNAc subunit on undecaprenyl-pyrophosphoryl-MurNAc-pentapeptide (lipid intermediate I) to form undecaprenyl-pyrophosphoryl-MurNAc-(pentapeptide)GlcNAc (lipid intermediate II). The polypeptide is UDP-N-acetylglucosamine--N-acetylmuramyl-(pentapeptide) pyrophosphoryl-undecaprenol N-acetylglucosamine transferase (Streptomyces avermitilis (strain ATCC 31267 / DSM 46492 / JCM 5070 / NBRC 14893 / NCIMB 12804 / NRRL 8165 / MA-4680)).